We begin with the raw amino-acid sequence, 174 residues long: UPF0398 protein llmg_0513 (174 aa).

The protein belongs to the UPF0398 family.

The chain is UPF0398 protein llmg_0513 from Lactococcus lactis subsp. cremoris (strain MG1363).